A 251-amino-acid chain; its full sequence is UPF0309 protein GK1441 (251 aa).

The 184-residue stretch at 31 to 214 (VSEAIQNGGI…VLMAENGIEP (184 aa)) folds into the SIS domain.

This sequence belongs to the UPF0309 family.

The chain is UPF0309 protein GK1441 from Geobacillus kaustophilus (strain HTA426).